The chain runs to 406 residues: Tyrosine--tRNA ligase (406 aa).

Positions 51 to 60 match the 'HIGH' region motif; it reads PTAPDLHLGH. The 'KMSKS' region motif lies at 236 to 240; sequence KMSKS. Residue K239 coordinates ATP. The S4 RNA-binding domain maps to 345–405; the sequence is IWICKAMVEG…GKRKFLRLIV (61 aa).

It belongs to the class-I aminoacyl-tRNA synthetase family. TyrS type 2 subfamily. Homodimer.

Its subcellular location is the cytoplasm. The enzyme catalyses tRNA(Tyr) + L-tyrosine + ATP = L-tyrosyl-tRNA(Tyr) + AMP + diphosphate + H(+). Its function is as follows. Catalyzes the attachment of tyrosine to tRNA(Tyr) in a two-step reaction: tyrosine is first activated by ATP to form Tyr-AMP and then transferred to the acceptor end of tRNA(Tyr). This chain is Tyrosine--tRNA ligase, found in Wolinella succinogenes (strain ATCC 29543 / DSM 1740 / CCUG 13145 / JCM 31913 / LMG 7466 / NCTC 11488 / FDC 602W) (Vibrio succinogenes).